The chain runs to 720 residues: 1,4-alpha-glucan branching enzyme GlgB (720 aa).

The active-site Nucleophile is the Asp-400. The active-site Proton donor is Glu-453.

The protein belongs to the glycosyl hydrolase 13 family. GlgB subfamily. Monomer.

The catalysed reaction is Transfers a segment of a (1-&gt;4)-alpha-D-glucan chain to a primary hydroxy group in a similar glucan chain.. The protein operates within glycan biosynthesis; glycogen biosynthesis. Functionally, catalyzes the formation of the alpha-1,6-glucosidic linkages in glycogen by scission of a 1,4-alpha-linked oligosaccharide from growing alpha-1,4-glucan chains and the subsequent attachment of the oligosaccharide to the alpha-1,6 position. The chain is 1,4-alpha-glucan branching enzyme GlgB from Chlamydia pneumoniae (Chlamydophila pneumoniae).